The sequence spans 177 residues: Crossover junction endodeoxyribonuclease RuvC (177 aa).

Active-site residues include Asp7, Glu68, and Asp141. Residues Asp7, Glu68, and Asp141 each coordinate Mg(2+).

This sequence belongs to the RuvC family. Homodimer which binds Holliday junction (HJ) DNA. The HJ becomes 2-fold symmetrical on binding to RuvC with unstacked arms; it has a different conformation from HJ DNA in complex with RuvA. In the full resolvosome a probable DNA-RuvA(4)-RuvB(12)-RuvC(2) complex forms which resolves the HJ. Mg(2+) is required as a cofactor.

The protein localises to the cytoplasm. It carries out the reaction Endonucleolytic cleavage at a junction such as a reciprocal single-stranded crossover between two homologous DNA duplexes (Holliday junction).. Functionally, the RuvA-RuvB-RuvC complex processes Holliday junction (HJ) DNA during genetic recombination and DNA repair. Endonuclease that resolves HJ intermediates. Cleaves cruciform DNA by making single-stranded nicks across the HJ at symmetrical positions within the homologous arms, yielding a 5'-phosphate and a 3'-hydroxyl group; requires a central core of homology in the junction. The consensus cleavage sequence is 5'-(A/T)TT(C/G)-3'. Cleavage occurs on the 3'-side of the TT dinucleotide at the point of strand exchange. HJ branch migration catalyzed by RuvA-RuvB allows RuvC to scan DNA until it finds its consensus sequence, where it cleaves and resolves the cruciform DNA. The polypeptide is Crossover junction endodeoxyribonuclease RuvC (Nocardioides sp. (strain ATCC BAA-499 / JS614)).